The chain runs to 421 residues: Phosphoribosylamine--glycine ligase (421 aa).

Residues 108-314 (KEIMVKYNVP…FAQNIDDIMM (207 aa)) form the ATP-grasp domain. 134–195 (IEEQGAPIVV…EEFLDGEEFS (62 aa)) lines the ATP pocket. Mg(2+)-binding residues include glutamate 284 and asparagine 286.

Belongs to the GARS family. The cofactor is Mg(2+). Requires Mn(2+) as cofactor.

It carries out the reaction 5-phospho-beta-D-ribosylamine + glycine + ATP = N(1)-(5-phospho-beta-D-ribosyl)glycinamide + ADP + phosphate + H(+). The protein operates within purine metabolism; IMP biosynthesis via de novo pathway; N(1)-(5-phospho-D-ribosyl)glycinamide from 5-phospho-alpha-D-ribose 1-diphosphate: step 2/2. This Streptococcus pyogenes serotype M3 (strain SSI-1) protein is Phosphoribosylamine--glycine ligase.